The sequence spans 316 residues: N-acetyl-gamma-glutamyl-phosphate reductase (316 aa).

C136 is an active-site residue.

This sequence belongs to the NAGSA dehydrogenase family. Type 1 subfamily.

Its subcellular location is the cytoplasm. The catalysed reaction is N-acetyl-L-glutamate 5-semialdehyde + phosphate + NADP(+) = N-acetyl-L-glutamyl 5-phosphate + NADPH + H(+). It participates in amino-acid biosynthesis; L-arginine biosynthesis; N(2)-acetyl-L-ornithine from L-glutamate: step 3/4. Catalyzes the NADPH-dependent reduction of N-acetyl-5-glutamyl phosphate to yield N-acetyl-L-glutamate 5-semialdehyde. The chain is N-acetyl-gamma-glutamyl-phosphate reductase from Xanthomonas campestris pv. campestris (strain 8004).